The sequence spans 295 residues: Diaminopimelate epimerase (295 aa).

Positions 13, 46, and 66 each coordinate substrate. Residue C75 is the Proton donor of the active site. Substrate contacts are provided by residues 76 to 77, N162, N195, and 213 to 214; these read GN and ER. C222 functions as the Proton acceptor in the catalytic mechanism. 223 to 224 contacts substrate; sequence GT.

The protein belongs to the diaminopimelate epimerase family. Homodimer.

The protein localises to the cytoplasm. It catalyses the reaction (2S,6S)-2,6-diaminopimelate = meso-2,6-diaminopimelate. It participates in amino-acid biosynthesis; L-lysine biosynthesis via DAP pathway; DL-2,6-diaminopimelate from LL-2,6-diaminopimelate: step 1/1. Functionally, catalyzes the stereoinversion of LL-2,6-diaminopimelate (L,L-DAP) to meso-diaminopimelate (meso-DAP), a precursor of L-lysine and an essential component of the bacterial peptidoglycan. In Psychrobacter cryohalolentis (strain ATCC BAA-1226 / DSM 17306 / VKM B-2378 / K5), this protein is Diaminopimelate epimerase.